Here is a 101-residue protein sequence, read N- to C-terminus: UPF0213 protein VC_A0739 (101 aa).

A GIY-YIG domain is found at Ser-9–Ala-85.

The protein belongs to the UPF0213 family.

The chain is UPF0213 protein VC_A0739 from Vibrio cholerae serotype O1 (strain ATCC 39315 / El Tor Inaba N16961).